The following is a 124-amino-acid chain: Small ribosomal subunit protein uS12 (124 aa).

The residue at position 89 (aspartate 89) is a 3-methylthioaspartic acid.

It belongs to the universal ribosomal protein uS12 family. As to quaternary structure, part of the 30S ribosomal subunit. Contacts proteins S8 and S17. May interact with IF1 in the 30S initiation complex.

Its function is as follows. With S4 and S5 plays an important role in translational accuracy. In terms of biological role, interacts with and stabilizes bases of the 16S rRNA that are involved in tRNA selection in the A site and with the mRNA backbone. Located at the interface of the 30S and 50S subunits, it traverses the body of the 30S subunit contacting proteins on the other side and probably holding the rRNA structure together. The combined cluster of proteins S8, S12 and S17 appears to hold together the shoulder and platform of the 30S subunit. The polypeptide is Small ribosomal subunit protein uS12 (Buchnera aphidicola subsp. Acyrthosiphon pisum (strain 5A)).